The primary structure comprises 209 residues: Ribosomal RNA large subunit methyltransferase E (209 aa).

Glycine 63, tryptophan 65, aspartate 83, aspartate 99, and aspartate 124 together coordinate S-adenosyl-L-methionine. Lysine 164 functions as the Proton acceptor in the catalytic mechanism.

It belongs to the class I-like SAM-binding methyltransferase superfamily. RNA methyltransferase RlmE family.

Its subcellular location is the cytoplasm. The enzyme catalyses uridine(2552) in 23S rRNA + S-adenosyl-L-methionine = 2'-O-methyluridine(2552) in 23S rRNA + S-adenosyl-L-homocysteine + H(+). Its function is as follows. Specifically methylates the uridine in position 2552 of 23S rRNA at the 2'-O position of the ribose in the fully assembled 50S ribosomal subunit. The chain is Ribosomal RNA large subunit methyltransferase E from Pseudoalteromonas translucida (strain TAC 125).